A 601-amino-acid polypeptide reads, in one-letter code: Tubulin polyglutamylase ttll-4 (601 aa).

The segment covering 1-18 (MSSGYSSAPSVSHTSSDT) has biased composition (polar residues). The segment at 1-37 (MSSGYSSAPSVSHTSSDTDLNRIDSYDDGAEETTDEQ) is disordered. The TTL domain maps to 138-476 (QARLTWCHNS…YVPPSFDKLS (339 aa)). Residues lysine 254, 260 to 261 (RG), 282 to 285 (QHYI), and 295 to 297 (KFD) each bind ATP. Position 260 (arginine 260) interacts with a protein. An L-glutamate-binding site is contributed by arginine 321. Residue 342–343 (TN) coordinates ATP. 3 residues coordinate L-glutamate: tyrosine 344, serine 345, and lysine 362. Positions 422, 435, and 437 each coordinate Mg(2+). Residue lysine 453 coordinates L-glutamate.

The protein belongs to the tubulin--tyrosine ligase family. It depends on Mg(2+) as a cofactor. In terms of tissue distribution, expressed in many sensory neurons in amphid.

The catalysed reaction is L-glutamyl-[protein] + L-glutamate + ATP = gamma-L-glutamyl-L-glutamyl-[protein] + ADP + phosphate + H(+). Monoglutamylase which modifies tubulin, adding a single glutamate on the gamma-carboxyl group of specific glutamate residues of target proteins. Involved in the side-chain initiation step of the polyglutamylation reaction but not in the elongation step. Preferentially modifies beta-tail tubulin over the alpha-tubulin. Involved in side-chain glutamylation of tubulin in sensory cilia. Together with ttll-5 and ttll-11, required for male mating. This chain is Tubulin polyglutamylase ttll-4, found in Caenorhabditis elegans.